The chain runs to 141 residues: HTH-type transcriptional repressor NsrR (141 aa).

Residues 2-129 enclose the HTH rrf2-type domain; that stretch reads QLTSFTDYAL…DDCSIAELLD (128 aa). The H-T-H motif DNA-binding region spans 28–51; the sequence is ITDVTELFGVSRNHMVKVINRLGQ. Residues Cys-91, Cys-96, and Cys-102 each coordinate [2Fe-2S] cluster.

[2Fe-2S] cluster is required as a cofactor.

Functionally, nitric oxide-sensitive repressor of genes involved in protecting the cell against nitrosative stress. May require iron for activity. The sequence is that of HTH-type transcriptional repressor NsrR from Vibrio vulnificus (strain CMCP6).